The chain runs to 628 residues: Forkhead box protein O (628 aa).

A Phosphothreonine; by PKB/AKT1 modification is found at Thr50. The residue at position 81 (Ser81) is a Phosphoserine. Positions 101 to 207 (WGNLSYADLI…ETSRYEKRRG (107 aa)) form a DNA-binding region, fork-head. 2 disordered regions span residues 188–210 (KSVRRRAASMETSRYEKRRGRAK) and 223–270 (GLND…SSCG). Phosphoserine; by PKB/AKT1 is present on Ser196. Composition is skewed to polar residues over residues 227–236 (ATPSPSSSVS) and 261–270 (RASSNASSCG). Phosphoserine; by PKB/AKT1 is present on Ser264. Ser267, Ser268, and Ser273 each carry phosphoserine. Disordered regions lie at residues 327 to 373 (SAAS…SLQP) and 398 to 451 (NSVT…QQQQ). Residues 334–343 (TQPPPPPYPA) show a composition bias toward pro residues. The span at 344-359 (PQQQQQQQPQQQQAYT) shows a compositional bias: low complexity. Residues 411-423 (SEPSSDSLNTYSN) show a composition bias toward polar residues. The segment covering 438 to 451 (QQQRQQQQQQQQQQ) has biased composition (low complexity).

In terms of assembly, interacts with melt.

It is found in the cytoplasm. It localises to the nucleus. Its function is as follows. Transcription factor involved in the regulation of the insulin signaling pathway. Consistently activates both the downstream target Thor\d4EBP and the feedback control target InR. Involved in negative regulation of the cell cycle, modulating cell growth and proliferation. In response to cellular stresses, such as nutrient deprivation or increased levels of reactive oxygen species, foxo is activated and inhibits growth through the action of target genes such as Thor. Foxo activated in the adult fat body can regulate lifespan in adults; an insulin peptide itself may function as one secondary messenger of insulin-regulated aging. Also regulates Lip4, homolog of human acid lipases, thereby acting as a key modulator of lipid metabolism by insulin signaling and integrates insulin responses to glucose and lipid homeostasis. In Drosophila willistoni (Fruit fly), this protein is Forkhead box protein O.